A 311-amino-acid polypeptide reads, in one-letter code: Glycine--tRNA ligase alpha subunit (311 aa).

It belongs to the class-II aminoacyl-tRNA synthetase family. In terms of assembly, tetramer of two alpha and two beta subunits.

The protein resides in the cytoplasm. The enzyme catalyses tRNA(Gly) + glycine + ATP = glycyl-tRNA(Gly) + AMP + diphosphate. The protein is Glycine--tRNA ligase alpha subunit of Brucella anthropi (strain ATCC 49188 / DSM 6882 / CCUG 24695 / JCM 21032 / LMG 3331 / NBRC 15819 / NCTC 12168 / Alc 37) (Ochrobactrum anthropi).